The sequence spans 295 residues: Shikimate dehydrogenase (NADP(+)) (295 aa).

Shikimate is bound by residues 24-26 (SRS) and Thr-71. The active-site Proton acceptor is the Lys-75. Glu-87 is an NADP(+) binding site. Residues Asn-96 and Asp-111 each contribute to the shikimate site. Residues 136–140 (GAGGA), 160–165 (NRTASR), and Met-233 each bind NADP(+). Tyr-235 contributes to the shikimate binding site. Gly-256 serves as a coordination point for NADP(+).

It belongs to the shikimate dehydrogenase family. Homodimer.

It catalyses the reaction shikimate + NADP(+) = 3-dehydroshikimate + NADPH + H(+). The protein operates within metabolic intermediate biosynthesis; chorismate biosynthesis; chorismate from D-erythrose 4-phosphate and phosphoenolpyruvate: step 4/7. Functionally, involved in the biosynthesis of the chorismate, which leads to the biosynthesis of aromatic amino acids. Catalyzes the reversible NADPH linked reduction of 3-dehydroshikimate (DHSA) to yield shikimate (SA). In Cupriavidus taiwanensis (strain DSM 17343 / BCRC 17206 / CCUG 44338 / CIP 107171 / LMG 19424 / R1) (Ralstonia taiwanensis (strain LMG 19424)), this protein is Shikimate dehydrogenase (NADP(+)).